Consider the following 278-residue polypeptide: Putative phosphoenolpyruvate synthase regulatory protein (278 aa).

158–165 serves as a coordination point for ADP; the sequence is GVSRSGKT.

This sequence belongs to the pyruvate, phosphate/water dikinase regulatory protein family. PSRP subfamily.

The enzyme catalyses [pyruvate, water dikinase] + ADP = [pyruvate, water dikinase]-phosphate + AMP + H(+). The catalysed reaction is [pyruvate, water dikinase]-phosphate + phosphate + H(+) = [pyruvate, water dikinase] + diphosphate. Its function is as follows. Bifunctional serine/threonine kinase and phosphorylase involved in the regulation of the phosphoenolpyruvate synthase (PEPS) by catalyzing its phosphorylation/dephosphorylation. This chain is Putative phosphoenolpyruvate synthase regulatory protein, found in Acinetobacter baumannii (strain AYE).